The primary structure comprises 100 residues: Small ribosomal subunit protein uS14 (100 aa).

Belongs to the universal ribosomal protein uS14 family. As to quaternary structure, part of the 30S ribosomal subunit. Contacts proteins S3 and S10.

Its function is as follows. Binds 16S rRNA, required for the assembly of 30S particles and may also be responsible for determining the conformation of the 16S rRNA at the A site. This is Small ribosomal subunit protein uS14 from Prochlorococcus marinus (strain NATL1A).